The following is a 267-amino-acid chain: MKRNFDSVKRLVIKIGTSSLVLPSGKINLEKIDQLAFVISSLHNKGIEVVLVSSGAMGFGLNVLDLETRPAEVGKQQAVSSVGQVAMMSLYSQVFSHYQTKVSQLLLTRDVVEYPESLANAINAFESLFELGVVPIVNENDAVSVDEMDHATKFGDNDRLSAIVAKVVGADLLIMLSDIDGLFDKNPNVYEDATLRSYVPEITEEILASAGAAGSKFGTGGMMSKIKSAQMVFENQSQMVLMNGENPRDILRVLEGAKIGTLFKQED.

K14 serves as a coordination point for ATP. Substrate-binding residues include S54, D141, and N157. ATP contacts are provided by residues 177–178 and 219–225; these read SD and TGGMMSK.

It belongs to the glutamate 5-kinase family.

It is found in the cytoplasm. It carries out the reaction L-glutamate + ATP = L-glutamyl 5-phosphate + ADP. The protein operates within amino-acid biosynthesis; L-proline biosynthesis; L-glutamate 5-semialdehyde from L-glutamate: step 1/2. Functionally, catalyzes the transfer of a phosphate group to glutamate to form L-glutamate 5-phosphate. The polypeptide is Glutamate 5-kinase (Streptococcus thermophilus (strain CNRZ 1066)).